Reading from the N-terminus, the 394-residue chain is Elongation factor Tu (394 aa).

In terms of domain architecture, tr-type G spans Lys-10–Glu-204. The interval Gly-19 to Thr-26 is G1. Gly-19 to Thr-26 lines the GTP pocket. Thr-26 contacts Mg(2+). Residues Gly-60 to Asn-64 form a G2 region. Residues Asp-81–Gly-84 are G3. GTP-binding positions include Asp-81–His-85 and Asn-136–Asp-139. The segment at Asn-136–Asp-139 is G4. A G5 region spans residues Ser-174–Leu-176.

This sequence belongs to the TRAFAC class translation factor GTPase superfamily. Classic translation factor GTPase family. EF-Tu/EF-1A subfamily. In terms of assembly, monomer.

It is found in the cytoplasm. The catalysed reaction is GTP + H2O = GDP + phosphate + H(+). GTP hydrolase that promotes the GTP-dependent binding of aminoacyl-tRNA to the A-site of ribosomes during protein biosynthesis. This Neisseria gonorrhoeae (strain ATCC 700825 / FA 1090) protein is Elongation factor Tu.